Here is a 32-residue protein sequence, read N- to C-terminus: Natriuretic peptide Coa_NP1 (32 aa).

A disulfide bridge connects residues Cys-8 and Cys-24.

Belongs to the natriuretic peptide family. Snake NP subfamily. In terms of tissue distribution, expressed by the venom gland.

The protein localises to the secreted. Its function is as follows. Snake venom natriuretic peptide that exhibits hypotensive and vasodepressor activity in rats. In Crotalus lutosus abyssus (Grand Canyon rattlesnake), this protein is Natriuretic peptide Coa_NP1.